The following is a 968-amino-acid chain: Protein translocase subunit SecA (968 aa).

Residues Q99, 117–121 (GEGKT), and D631 each bind ATP.

This sequence belongs to the SecA family. Monomer and homodimer. Part of the essential Sec protein translocation apparatus which comprises SecA, SecYEG and auxiliary proteins SecDF. Other proteins may also be involved.

The protein resides in the cell inner membrane. It localises to the cytoplasm. It catalyses the reaction ATP + H2O + cellular proteinSide 1 = ADP + phosphate + cellular proteinSide 2.. Part of the Sec protein translocase complex. Interacts with the SecYEG preprotein conducting channel. Has a central role in coupling the hydrolysis of ATP to the transfer of proteins into and across the cell membrane, serving as an ATP-driven molecular motor driving the stepwise translocation of polypeptide chains across the membrane. In Chlamydia muridarum (strain MoPn / Nigg), this protein is Protein translocase subunit SecA.